A 286-amino-acid polypeptide reads, in one-letter code: Flagellar filament 33 kDa core protein (286 aa).

This sequence belongs to the bacterial flagellin family. The flagellum consists of an outer layer composed of repeating units of FlaA around a core that contains several antigenically related polypeptides.

The protein localises to the periplasmic flagellum. Its subcellular location is the periplasm. Functionally, component of the core of the flagella. This is Flagellar filament 33 kDa core protein from Treponema phagedenis.